Reading from the N-terminus, the 69-residue chain is DNA gyrase inhibitor YacG (69 aa).

The Zn(2+) site is built by Cys13, Cys16, Cys32, and Cys36.

Belongs to the DNA gyrase inhibitor YacG family. As to quaternary structure, interacts with GyrB. Requires Zn(2+) as cofactor.

Inhibits all the catalytic activities of DNA gyrase by preventing its interaction with DNA. Acts by binding directly to the C-terminal domain of GyrB, which probably disrupts DNA binding by the gyrase. The chain is DNA gyrase inhibitor YacG from Neisseria gonorrhoeae (strain ATCC 700825 / FA 1090).